Here is a 216-residue protein sequence, read N- to C-terminus: Thiopurine S-methyltransferase (216 aa).

S-adenosyl-L-methionine contacts are provided by Trp10, Leu45, Glu66, and Arg123.

Belongs to the class I-like SAM-binding methyltransferase superfamily. TPMT family.

The protein resides in the cytoplasm. The catalysed reaction is S-adenosyl-L-methionine + a thiopurine = S-adenosyl-L-homocysteine + a thiopurine S-methylether.. The protein is Thiopurine S-methyltransferase of Pseudomonas putida (strain GB-1).